Reading from the N-terminus, the 235-residue chain is Phosphoribosylaminoimidazole-succinocarboxamide synthase (235 aa).

Belongs to the SAICAR synthetase family.

The catalysed reaction is 5-amino-1-(5-phospho-D-ribosyl)imidazole-4-carboxylate + L-aspartate + ATP = (2S)-2-[5-amino-1-(5-phospho-beta-D-ribosyl)imidazole-4-carboxamido]succinate + ADP + phosphate + 2 H(+). It participates in purine metabolism; IMP biosynthesis via de novo pathway; 5-amino-1-(5-phospho-D-ribosyl)imidazole-4-carboxamide from 5-amino-1-(5-phospho-D-ribosyl)imidazole-4-carboxylate: step 1/2. This Streptococcus gordonii (strain Challis / ATCC 35105 / BCRC 15272 / CH1 / DL1 / V288) protein is Phosphoribosylaminoimidazole-succinocarboxamide synthase.